A 367-amino-acid polypeptide reads, in one-letter code: Coiled-coil domain-containing protein 34 (367 aa).

Serine 55 bears the Phosphoserine mark. Disordered stretches follow at residues 77 to 105 (FPFG…KVES), 191 to 228 (QKKN…KAKE), and 310 to 349 (YNPI…SSLA). Residues 82-97 (DDSEGEDEEALDEDAR) show a composition bias toward acidic residues. 2 coiled-coil regions span residues 87–108 (EDEE…SLEG) and 153–280 (RLQQ…AKNK). Residues 197–228 (ERKEREQKINKEMEEKEAKKREKEHLQEKAKE) are compositionally biased toward basic and acidic residues. Residues 339 to 349 (ASQPLPSSSLA) are compositionally biased toward low complexity.

As to expression, expressed in testis and sperm.

The protein resides in the cell projection. It is found in the cilium. Its subcellular location is the flagellum. In terms of biological role, involved in spermatogenesis. Has a probable role in anterograde intraflagellar transport which is essential for the formation of sperm flagella. The chain is Coiled-coil domain-containing protein 34 (Ccdc34) from Mus musculus (Mouse).